Reading from the N-terminus, the 197-residue chain is Thymidine kinase (197 aa).

ATP-binding positions include 9–16 (SAMDAGKT) and 87–90 (DEIH). Glu88 serves as the catalytic Proton acceptor. Residues Cys145, Cys147, Cys187, and His190 each coordinate Zn(2+).

This sequence belongs to the thymidine kinase family. Homotetramer.

The protein resides in the cytoplasm. It catalyses the reaction thymidine + ATP = dTMP + ADP + H(+). The polypeptide is Thymidine kinase (Francisella tularensis subsp. holarctica (strain LVS)).